A 394-amino-acid polypeptide reads, in one-letter code: Elongation factor Tu (394 aa).

Residues 10-204 (KPHVNVGTIG…HLDSYIPEPE (195 aa)) form the tr-type G domain. The tract at residues 19-26 (GHVDHGKT) is G1. 19–26 (GHVDHGKT) is a binding site for GTP. Threonine 26 is a binding site for Mg(2+). Positions 60 to 64 (GITIN) are G2. A G3 region spans residues 81-84 (DCPG). Residues 81–85 (DCPGH) and 136–139 (NKCD) each bind GTP. The tract at residues 136–139 (NKCD) is G4. The G5 stretch occupies residues 174–176 (SAL).

This sequence belongs to the TRAFAC class translation factor GTPase superfamily. Classic translation factor GTPase family. EF-Tu/EF-1A subfamily. In terms of assembly, monomer.

It is found in the cytoplasm. The enzyme catalyses GTP + H2O = GDP + phosphate + H(+). GTP hydrolase that promotes the GTP-dependent binding of aminoacyl-tRNA to the A-site of ribosomes during protein biosynthesis. This is Elongation factor Tu from Cronobacter sakazakii (strain ATCC BAA-894) (Enterobacter sakazakii).